The chain runs to 324 residues: Quinolinate synthase (324 aa).

Histidine 44 and serine 62 together coordinate iminosuccinate. Cysteine 107 is a binding site for [4Fe-4S] cluster. Iminosuccinate contacts are provided by residues 133–135 (YVN) and serine 150. [4Fe-4S] cluster is bound at residue cysteine 192. Residues 218 to 220 (HPE) and threonine 235 each bind iminosuccinate. [4Fe-4S] cluster is bound at residue cysteine 278.

The protein belongs to the quinolinate synthase family. Type 2 subfamily. Requires [4Fe-4S] cluster as cofactor.

Its subcellular location is the cytoplasm. The enzyme catalyses iminosuccinate + dihydroxyacetone phosphate = quinolinate + phosphate + 2 H2O + H(+). It participates in cofactor biosynthesis; NAD(+) biosynthesis; quinolinate from iminoaspartate: step 1/1. Its function is as follows. Catalyzes the condensation of iminoaspartate with dihydroxyacetone phosphate to form quinolinate. This Leptospira interrogans serogroup Icterohaemorrhagiae serovar copenhageni (strain Fiocruz L1-130) protein is Quinolinate synthase.